Consider the following 186-residue polypeptide: Acetyltransferase PA5475 (186 aa).

An N-acetyltransferase domain is found at Val-31–Leu-186. Residues Val-117–Ile-119, Gly-125, Asn-156, and Asp-161–Cys-163 each bind CoA.

In terms of biological role, catalyzes the transfer of an acetyl group from acetyl coenzyme A (AcCoA) to an acceptor substrate and releases both CoA and the acetylated product. It prefers the antibiotic chloramphenicol. This chain is Acetyltransferase PA5475, found in Pseudomonas aeruginosa (strain ATCC 15692 / DSM 22644 / CIP 104116 / JCM 14847 / LMG 12228 / 1C / PRS 101 / PAO1).